A 1016-amino-acid polypeptide reads, in one-letter code: MSQGPPTGESSEPEAKVLHTKRLYRAVVEAVHRLDLILCNKTAYQEVFKPENISLRNKLRELCVKLMFLHPVDYGRKAEELLWRKVYYEVIQLIKTNKKHIHSRSTLECAYRTHLVAGIGFYQHLLLYIQSHYQLELQCCIDWTHVTDPLIGCKKPVSASGKEMDWAQMACHRCLVYLGDLSRYQNELAGVDTELLAERFYYQALSVAPQIGMPFNQLGTLAGSKYYNVEAMYCYLRCIQSEVSFEGAYGNLKRLYDKAAKMYHQLKKCETRKLSPGKKRCKDIKRLLVNFMYLQSLLQPKSSSVDSELTSLCQSVLEDFNLCLFYLPSSPNLSLASEDEEEYESGYAFLPDLLIFQMVIICLMCVHSLERAGSKQYSAAIAFTLALFSHLVNHVNIRLQAELEEGENPVPAFQSDGTDEPESKEPVEKEEEPDPEPPPVTPQVGEGRKSRKFSRLSCLRRRRHPPKVGDDSDLSEGFESDSSHDSARASEGSDSGSDKSLEGGGTAFDAETDSEMNSQESRSDLEDMEEEEGTRSPTLEPPRGRSEAPDSLNGPLGPSEASIASNLQAMSTQMFQTKRCFRLAPTFSNLLLQPTTNPHTSASHRPCVNGDVDKPSEPASEEGSESEGSESSGRSCRNERSIQEKLQVLMAEGLLPAVKVFLDWLRTNPDLIIVCAQSSQSLWNRLSVLLNLLPAAGELQESGLALCPEVQDLLEGCELPDLPSSLLLPEDMALRNLPPLRAAHRRFNFDTDRPLLSTLEESVVRICCIRSFGHFIARLQGSILQFNPEVGIFVSIAQSEQESLLQQAQAQFRMAQEEARRNRLMRDMAQLRLQLEVSQLEGSLQQPKAQSAMSPYLVPDTQALCHHLPVIRQLATSGRFIVIIPRTVIDGLDLLKKEHPGARDGIRYLEAEFKKGNRYIRCQKEVGKSFERHKLKRQDADAWTLYKILDSCKQLTLAQGAGEEDPSGMVTIITGLPLDNPSVLSGPMQAALQAAAHASVDIKNVLDFYKQWKEIG.

Residue Ser-2 is modified to N-acetylserine. 2 positions are modified to phosphoserine: Ser-2 and Ser-423. Disordered stretches follow at residues Asn-408–Ala-561 and Pro-594–Arg-637. Residues Lys-449–Pro-466 are compositionally biased toward basic residues. Residues Pro-594–Ser-603 show a composition bias toward polar residues. Over residues Ala-619–Gly-628 the composition is skewed to acidic residues. Residues Gln-798–Glu-841 are a coiled coil. The PINc domain maps to Arg-872–Ala-995.

As to quaternary structure, interacts with TERT, PPP2CA and SMG1. Part of a complex that contains SMG1, SMG5, SMG7, PPP2CA, a short isoform of UPF3A (isoform UPF3AS, but not isoform UPF3AL) and phosphorylated UPF1. Not detected in complexes that contain unphosphorylated UPF1. Ubiquitous.

The protein localises to the cytoplasm. Its subcellular location is the nucleus. Functionally, plays a role in nonsense-mediated mRNA decay. Does not have RNase activity by itself. Promotes dephosphorylation of UPF1. Together with SMG7 is thought to provide a link to the mRNA degradation machinery involving exonucleolytic pathways, and to serve as an adapter for UPF1 to protein phosphatase 2A (PP2A), thereby triggering UPF1 dephosphorylation. Necessary for TERT activity. This is Nonsense-mediated mRNA decay factor SMG5 from Homo sapiens (Human).